The following is a 383-amino-acid chain: Centractin (383 aa).

Residues 227–246 (PQKEEELLEPDSSSSKPVQP) form a disordered region.

Belongs to the actin family. ARP1 subfamily.

Its subcellular location is the cytoplasm. The protein localises to the cytoskeleton. It localises to the microtubule organizing center. It is found in the centrosome. Its function is as follows. Component of a multi-subunit complex, PPK2 (poly P kinase complex 2) involved in microtubule based vesicle motility. It is associated with the centrosome. PPK2 complex can synthesize a poly chain of hundreds of phosphate residues linked by ATP-like bonds. This is Centractin (arpA) from Dictyostelium discoideum (Social amoeba).